A 515-amino-acid chain; its full sequence is Maturase K (515 aa).

It belongs to the intron maturase 2 family. MatK subfamily.

Its subcellular location is the plastid. The protein localises to the chloroplast. Functionally, usually encoded in the trnK tRNA gene intron. Probably assists in splicing its own and other chloroplast group II introns. The polypeptide is Maturase K (Pinus luchuensis (Ryukyu island pine)).